The primary structure comprises 107 residues: uncharacterized protein (107 aa).

A helical membrane pass occupies residues 52–72; it reads LIIHDLFIYIFILNFFFFPFC.

Its subcellular location is the membrane. This is an uncharacterized protein from Saccharomyces cerevisiae (strain ATCC 204508 / S288c) (Baker's yeast).